The primary structure comprises 962 residues: Putative RNA Helicase B962L (962 aa).

A Helicase ATP-binding domain is found at 43-229 (IPTSLADRVL…FGIGKENIIL (187 aa)). Position 56–63 (56–63 (SRTGSGKS)) interacts with ATP. The short motif at 167 to 170 (DEAH) is the DEAH box element. The 207-residue stretch at 253-459 (ACETALTIHK…TIKKNKEGVF (207 aa)) folds into the Helicase C-terminal domain. The chain crosses the membrane as a helical span at residues 521 to 541 (GYFWQAAISDIATILAVVSVA).

It belongs to the DEAD box helicase family. DEAH subfamily.

It is found in the host membrane. The protein resides in the virion. It carries out the reaction ATP + H2O = ADP + phosphate + H(+). In African swine fever virus (isolate Warthog/Namibia/Wart80/1980) (ASFV), this protein is Putative RNA Helicase B962L.